We begin with the raw amino-acid sequence, 710 residues long: Prolyl endopeptidase (710 aa).

Met1 is modified (N-acetylmethionine). At Lys157 the chain carries N6-acetyllysine. Residues Ser554, Asp641, and His680 each act as charge relay system in the active site.

This sequence belongs to the peptidase S9A family.

It is found in the cytoplasm. The enzyme catalyses Hydrolysis of Pro-|-Xaa &gt;&gt; Ala-|-Xaa in oligopeptides.. Functionally, cleaves peptide bonds on the C-terminal side of prolyl residues within peptides that are up to approximately 30 amino acids long. This Mus musculus (Mouse) protein is Prolyl endopeptidase (Prep).